The sequence spans 335 residues: 3-isopropylmalate dehydrogenase (335 aa).

Residues Arg-87, Arg-97, Arg-121, and Asp-211 each contribute to the substrate site. Residues Asp-211, Asp-235, and Asp-239 each contribute to the Mg(2+) site. 271–283 (GSAPDIAGQSKAD) lines the NAD(+) pocket.

This sequence belongs to the isocitrate and isopropylmalate dehydrogenases family. LeuB type 2 subfamily. As to quaternary structure, homodimer. The cofactor is Mg(2+). Requires Mn(2+) as cofactor.

Its subcellular location is the cytoplasm. It carries out the reaction (2R,3S)-3-isopropylmalate + NAD(+) = 4-methyl-2-oxopentanoate + CO2 + NADH. It functions in the pathway amino-acid biosynthesis; L-leucine biosynthesis; L-leucine from 3-methyl-2-oxobutanoate: step 3/4. Catalyzes the oxidation of 3-carboxy-2-hydroxy-4-methylpentanoate (3-isopropylmalate) to 3-carboxy-4-methyl-2-oxopentanoate. The product decarboxylates to 4-methyl-2 oxopentanoate. This Nocardia farcinica (strain IFM 10152) protein is 3-isopropylmalate dehydrogenase.